The sequence spans 149 residues: Placenta growth factor (149 aa).

Residues 1–18 (MPTVRLFTCFLQLLTGLV) form the signal peptide. N-linked (GlcNAc...) asparagine glycosylation is present at Asn33. Disulfide bonds link Cys52/Cys94, Cys83/Cys128, and Cys87/Cys130. The N-linked (GlcNAc...) asparagine glycan is linked to Asn101.

The protein belongs to the PDGF/VEGF growth factor family. Antiparallel homodimer; disulfide-linked. Also found as heterodimer with VEGFA/VEGF.

The protein localises to the secreted. Growth factor active in angiogenesis and endothelial cell growth, stimulating their proliferation and migration. It binds to the receptor FLT1/VEGFR-1. Also promotes cell tumor growth. This chain is Placenta growth factor (PGF), found in Bos taurus (Bovine).